The following is a 227-amino-acid chain: Cytochrome c oxidase subunit 2 (227 aa).

Residues 1–14 (MAYPMQLGLQDATS) lie on the Mitochondrial intermembrane side of the membrane. The helical transmembrane segment at 15–45 (PIMEELLHFHDHTLMIVFLISSLVLYIISLM) threads the bilayer. Residues 46–59 (LTTKLTHTSTMDAQ) lie on the Mitochondrial matrix side of the membrane. The helical transmembrane segment at 60-87 (EVETIWTILPAIILIMIALPSLRILYMM) threads the bilayer. Residues 88-227 (DEINNPSLTV…HFEKWSASML (140 aa)) lie on the Mitochondrial intermembrane side of the membrane. Residues H161, C196, E198, C200, H204, and M207 each contribute to the Cu cation site. Residue E198 participates in Mg(2+) binding.

Belongs to the cytochrome c oxidase subunit 2 family. Component of the cytochrome c oxidase (complex IV, CIV), a multisubunit enzyme composed of 14 subunits. The complex is composed of a catalytic core of 3 subunits MT-CO1, MT-CO2 and MT-CO3, encoded in the mitochondrial DNA, and 11 supernumerary subunits COX4I, COX5A, COX5B, COX6A, COX6B, COX6C, COX7A, COX7B, COX7C, COX8 and NDUFA4, which are encoded in the nuclear genome. The complex exists as a monomer or a dimer and forms supercomplexes (SCs) in the inner mitochondrial membrane with NADH-ubiquinone oxidoreductase (complex I, CI) and ubiquinol-cytochrome c oxidoreductase (cytochrome b-c1 complex, complex III, CIII), resulting in different assemblies (supercomplex SCI(1)III(2)IV(1) and megacomplex MCI(2)III(2)IV(2)). Found in a complex with TMEM177, COA6, COX18, COX20, SCO1 and SCO2. Interacts with TMEM177 in a COX20-dependent manner. Interacts with COX20. Interacts with COX16. The cofactor is Cu cation.

The protein resides in the mitochondrion inner membrane. It catalyses the reaction 4 Fe(II)-[cytochrome c] + O2 + 8 H(+)(in) = 4 Fe(III)-[cytochrome c] + 2 H2O + 4 H(+)(out). In terms of biological role, component of the cytochrome c oxidase, the last enzyme in the mitochondrial electron transport chain which drives oxidative phosphorylation. The respiratory chain contains 3 multisubunit complexes succinate dehydrogenase (complex II, CII), ubiquinol-cytochrome c oxidoreductase (cytochrome b-c1 complex, complex III, CIII) and cytochrome c oxidase (complex IV, CIV), that cooperate to transfer electrons derived from NADH and succinate to molecular oxygen, creating an electrochemical gradient over the inner membrane that drives transmembrane transport and the ATP synthase. Cytochrome c oxidase is the component of the respiratory chain that catalyzes the reduction of oxygen to water. Electrons originating from reduced cytochrome c in the intermembrane space (IMS) are transferred via the dinuclear copper A center (CU(A)) of subunit 2 and heme A of subunit 1 to the active site in subunit 1, a binuclear center (BNC) formed by heme A3 and copper B (CU(B)). The BNC reduces molecular oxygen to 2 water molecules using 4 electrons from cytochrome c in the IMS and 4 protons from the mitochondrial matrix. This Damaliscus pygargus phillipsi (Blesbok) protein is Cytochrome c oxidase subunit 2 (MT-CO2).